The primary structure comprises 347 residues: Quinolinate synthase (347 aa).

Positions 47 and 68 each coordinate iminosuccinate. Cysteine 113 is a [4Fe-4S] cluster binding site. Residues 139–141 (YAN) and serine 156 contribute to the iminosuccinate site. Cysteine 200 serves as a coordination point for [4Fe-4S] cluster. Iminosuccinate contacts are provided by residues 226–228 (HPE) and threonine 243. Cysteine 297 is a [4Fe-4S] cluster binding site.

The protein belongs to the quinolinate synthase family. Type 1 subfamily. Requires [4Fe-4S] cluster as cofactor.

The protein resides in the cytoplasm. It catalyses the reaction iminosuccinate + dihydroxyacetone phosphate = quinolinate + phosphate + 2 H2O + H(+). The protein operates within cofactor biosynthesis; NAD(+) biosynthesis; quinolinate from iminoaspartate: step 1/1. In terms of biological role, catalyzes the condensation of iminoaspartate with dihydroxyacetone phosphate to form quinolinate. The sequence is that of Quinolinate synthase from Salmonella typhi.